A 204-amino-acid polypeptide reads, in one-letter code: Putative F-box protein L168 (204 aa).

The 46-residue stretch at 1-46 (MNLCDLFDEIIIGIIDELSDRDKIKFMTTCSRFYYFIDKTKYFDIY) folds into the F-box domain. Residues 161-184 (NETNKITNNHTNKKINNNKKHQNN) are disordered. The span at 171–183 (TNKKINNNKKHQN) shows a compositional bias: basic residues.

The sequence is that of Putative F-box protein L168 from Acanthamoeba polyphaga (Amoeba).